The chain runs to 1025 residues: DNA ligase 4 (1025 aa).

Residues 1–36 (MMQPTPAPSSAPGSPQRTQAEPEMETPSYPQPPQNV) form a disordered region. Positions 289, 291, 292, 296, 349, 387, 447, 452, 469, and 471 each coordinate ATP. Residue K291 is the N6-AMP-lysine intermediate of the active site. E349 contributes to the Mg(2+) binding site. Residue E447 coordinates Mg(2+). The BRCT 1 domain occupies 667 to 763 (VKTDIFNGMK…EPAPFKKKYF (97 aa)). Residues 773–904 (ADEYNEDDGE…TTPDVDGDVK (132 aa)) are disordered. Acidic residues-rich tracts occupy residues 775 to 785 (EYNEDDGEEEG) and 806 to 816 (SETEDEDEEQA). Residues 817-838 (PEIKEEQDGELHEWLKVDDRKS) show a composition bias toward basic and acidic residues. The segment covering 845–870 (DEEDSVTEDDSDNADVADEEEPDLDD) has biased composition (acidic residues). Basic and acidic residues predominate over residues 891-904 (RHRETTPDVDGDVK). The region spanning 915–1025 (DPDVIFKHLC…TLLDEEGESF (111 aa)) is the BRCT 2 domain.

This sequence belongs to the ATP-dependent DNA ligase family. It depends on Mg(2+) as a cofactor.

The protein resides in the nucleus. The enzyme catalyses ATP + (deoxyribonucleotide)n-3'-hydroxyl + 5'-phospho-(deoxyribonucleotide)m = (deoxyribonucleotide)n+m + AMP + diphosphate.. In terms of biological role, DNA ligase involved in DNA non-homologous end joining (NHEJ); required for double-strand break (DSB) repair. The protein is DNA ligase 4 (LIG4) of Coprinopsis cinerea (strain Okayama-7 / 130 / ATCC MYA-4618 / FGSC 9003) (Inky cap fungus).